Reading from the N-terminus, the 154-residue chain is Keratin-associated protein 9-9 (154 aa).

14 consecutive repeat copies span residues 8–12 (CCQPT), 13–17 (CCRTT), 18–22 (CCRTT), 37–41 (CCQPS), 42–46 (CCVSS), 51–55 (CCRPA), 56–60 (CCQNT), 61–65 (CCRTT), 66–70 (CCQPT), 75–79 (CCGQT), 124–128 (CCRPA), 129–133 (CCETT), 134–137 (CCRT), and 148–152 (CCQPS). A 14 X 5 AA repeats of C-C-[RQVGE]-[SPSTNQ]-[TASL] region spans residues 8–152 (CCQPTCCRTT…TCVSSCCQPS (145 aa)).

This sequence belongs to the KRTAP type 9 family. Interacts with hair keratins.

Functionally, in the hair cortex, hair keratin intermediate filaments are embedded in an interfilamentous matrix, consisting of hair keratin-associated proteins (KRTAP), which are essential for the formation of a rigid and resistant hair shaft through their extensive disulfide bond cross-linking with abundant cysteine residues of hair keratins. The matrix proteins include the high-sulfur and high-glycine-tyrosine keratins. This chain is Keratin-associated protein 9-9 (KRTAP9-9), found in Homo sapiens (Human).